Reading from the N-terminus, the 526-residue chain is Variant surface glycoprotein MITAT 1.4A (526 aa).

The N-terminal stretch at 1–33 (MDCHTKETLGVTQWRRSTMLTLSLLYAITPADG) is a signal peptide. Disulfide bonds link Cys47/Cys173 and Cys154/Cys215. The tract at residues 157–193 (NEGGDGDGKDQLAPKGCRHGTEADFDAGAGPAESEVA) is disordered. A glycan (N-linked (GlcNAc...) asparagine) is linked at Asn453. Asp503 carries the GPI-anchor amidated aspartate lipid modification. The propeptide at 504–526 (SSILVTKKFALTVVSAAFVALLF) is removed in mature form.

It is found in the cell membrane. Its function is as follows. VSG forms a coat on the surface of the parasite. The trypanosome evades the immune response of the host by expressing a series of antigenically distinct VSGs from an estimated 1000 VSG genes. This is Variant surface glycoprotein MITAT 1.4A from Trypanosoma brucei brucei.